The following is a 151-amino-acid chain: Probable desiccation-related protein LEA14 (151 aa).

Belongs to the LEA type 2 family.

The sequence is that of Probable desiccation-related protein LEA14 (LEA14) from Arabidopsis thaliana (Mouse-ear cress).